The chain runs to 586 residues: Aspartate--tRNA(Asp/Asn) ligase (586 aa).

L-aspartate is bound at residue Glu175. Positions 199–202 (QIFK) are aspartate. Arg221 lines the L-aspartate pocket. Residues 221–223 (RDE) and Gln230 each bind ATP. An L-aspartate-binding site is contributed by His448. An ATP-binding site is contributed by Glu482. An L-aspartate-binding site is contributed by Arg489. 534 to 537 (GVDR) is an ATP binding site.

Belongs to the class-II aminoacyl-tRNA synthetase family. Type 1 subfamily. As to quaternary structure, homodimer.

The protein localises to the cytoplasm. The enzyme catalyses tRNA(Asx) + L-aspartate + ATP = L-aspartyl-tRNA(Asx) + AMP + diphosphate. Its function is as follows. Aspartyl-tRNA synthetase with relaxed tRNA specificity since it is able to aspartylate not only its cognate tRNA(Asp) but also tRNA(Asn). Reaction proceeds in two steps: L-aspartate is first activated by ATP to form Asp-AMP and then transferred to the acceptor end of tRNA(Asp/Asn). The protein is Aspartate--tRNA(Asp/Asn) ligase of Syntrophomonas wolfei subsp. wolfei (strain DSM 2245B / Goettingen).